A 188-amino-acid chain; its full sequence is Elongation factor P (188 aa).

An N6-(3,6-diaminohexanoyl)-5-hydroxylysine modification is found at K34.

This sequence belongs to the elongation factor P family. Post-translationally, may be beta-lysylated on the epsilon-amino group of Lys-34 by the combined action of EpmA and EpmB, and then hydroxylated on the C5 position of the same residue by EpmC (if this protein is present). Lysylation is critical for the stimulatory effect of EF-P on peptide-bond formation. The lysylation moiety may extend toward the peptidyltransferase center and stabilize the terminal 3-CCA end of the tRNA. Hydroxylation of the C5 position on Lys-34 may allow additional potential stabilizing hydrogen-bond interactions with the P-tRNA.

It localises to the cytoplasm. It participates in protein biosynthesis; polypeptide chain elongation. Involved in peptide bond synthesis. Alleviates ribosome stalling that occurs when 3 or more consecutive Pro residues or the sequence PPG is present in a protein, possibly by augmenting the peptidyl transferase activity of the ribosome. Modification of Lys-34 is required for alleviation. The protein is Elongation factor P of Vibrio cholerae serotype O1 (strain ATCC 39541 / Classical Ogawa 395 / O395).